The sequence spans 146 residues: Transcriptional regulator MraZ (146 aa).

2 consecutive SpoVT-AbrB domains span residues 5-48 (TSYH…TLEE) and 77-120 (ASEC…SRAK).

This sequence belongs to the MraZ family. In terms of assembly, forms oligomers.

The protein resides in the cytoplasm. The protein localises to the nucleoid. The polypeptide is Transcriptional regulator MraZ (Desulfosudis oleivorans (strain DSM 6200 / JCM 39069 / Hxd3) (Desulfococcus oleovorans)).